The sequence spans 546 residues: Chaperonin GroEL 2 (546 aa).

Residues 29-32 (TLGP), 86-90 (DGTTT), Gly-418, 482-484 (NAA), and Asp-498 contribute to the ATP site.

The protein belongs to the chaperonin (HSP60) family. As to quaternary structure, forms a cylinder of 14 subunits composed of two heptameric rings stacked back-to-back. Interacts with the co-chaperonin GroES.

The protein resides in the cytoplasm. The catalysed reaction is ATP + H2O + a folded polypeptide = ADP + phosphate + an unfolded polypeptide.. Functionally, together with its co-chaperonin GroES, plays an essential role in assisting protein folding. The GroEL-GroES system forms a nano-cage that allows encapsulation of the non-native substrate proteins and provides a physical environment optimized to promote and accelerate protein folding. This is Chaperonin GroEL 2 from Corynebacterium diphtheriae (strain ATCC 700971 / NCTC 13129 / Biotype gravis).